The following is an 87-amino-acid chain: DNA polymerase epsilon subunit C (87 aa).

In terms of assembly, DNA polymerase epsilon is a heterotetramer consisting of cdc20/Pol2, dpb2, dpb3, and dpb4. Also forms a heterodimer consisting dpb3 and dpb4. Interacts directly with cdc20/pol2 and dpb4.

The protein resides in the nucleus. Functionally, as accessory component of the DNA polymerase epsilon (DNA polymerase II) participates in chromosomal DNA replication. It is required during synthesis of the leading and lagging DNA strands at the replication fork and binds at/or near replication origins and moves along DNA with the replication fork. It has 3'-5' proofreading exonuclease activity that correct errors arising during DNA replication. It is also involved in DNA synthesis during DNA repair. The dpb3-dpb4 dimer associates with histone deacetylases, chromatin remodelers, and histones and plays a crucial role in the inheritance of histone hypoacetylation and H3K9 methylation in heterochromatin. The dpb3-dpb4 dimer is also required for the recruitment of sir2 to heterochromatin. In Schizosaccharomyces pombe (strain 972 / ATCC 24843) (Fission yeast), this protein is DNA polymerase epsilon subunit C.